Consider the following 361-residue polypeptide: Phospho-N-acetylmuramoyl-pentapeptide-transferase (361 aa).

10 helical membrane-spanning segments follow: residues 26–46 (AGGA…CIIE), 71–91 (TPTM…FLWA), 97–117 (FILW…CDDY), 134–154 (IFGQ…FPSN), 168–188 (GFFI…IVGS), 200–220 (GLAI…AYFA), 236–256 (GAGE…GFLW), 264–284 (IFMG…VSLF), 290–310 (VLVL…IQIF), and 338–358 (KVTV…FASL).

This sequence belongs to the glycosyltransferase 4 family. MraY subfamily. The cofactor is Mg(2+).

The protein resides in the cell membrane. It carries out the reaction UDP-N-acetyl-alpha-D-muramoyl-L-alanyl-gamma-D-glutamyl-meso-2,6-diaminopimeloyl-D-alanyl-D-alanine + di-trans,octa-cis-undecaprenyl phosphate = di-trans,octa-cis-undecaprenyl diphospho-N-acetyl-alpha-D-muramoyl-L-alanyl-D-glutamyl-meso-2,6-diaminopimeloyl-D-alanyl-D-alanine + UMP. It participates in cell wall biogenesis; peptidoglycan biosynthesis. Functionally, catalyzes the initial step of the lipid cycle reactions in the biosynthesis of the cell wall peptidoglycan: transfers peptidoglycan precursor phospho-MurNAc-pentapeptide from UDP-MurNAc-pentapeptide onto the lipid carrier undecaprenyl phosphate, yielding undecaprenyl-pyrophosphoryl-MurNAc-pentapeptide, known as lipid I. The polypeptide is Phospho-N-acetylmuramoyl-pentapeptide-transferase (Endomicrobium trichonymphae).